The chain runs to 317 residues: UAP56-interacting factor (317 aa).

An N-acetylmethionine modification is found at methionine 1. Positions 1 to 26 (MNRFGTRLVGATATPPPPPKARSNEN) are disordered. Threonine 14 carries the post-translational modification Phosphothreonine. Serine 23 carries the post-translational modification Phosphoserine. Positions 26 to 44 (NLDKIDMSLDDIIKLNRKE) match the UAP56-binding motif motif. A phosphoserine mark is found at serine 60 and serine 117. Lysine 139 is covalently cross-linked (Glycyl lysine isopeptide (Lys-Gly) (interchain with G-Cter in SUMO1)). Lysine 260 participates in a covalent cross-link: Glycyl lysine isopeptide (Lys-Gly) (interchain with G-Cter in SUMO2).

The protein belongs to the UIF family. As to quaternary structure, interacts with DDX39B/UAP56 and NXF1; interaction with DDX39B/UAP56 and NXF1 are mutually exclusive. Interacts with SSRP1; required for its recruitment to mRNAs. Interacts with CHTOP.

It localises to the nucleus. Its subcellular location is the nucleoplasm. It is found in the nucleus speckle. Its function is as follows. Required for mRNA export from the nucleus to the cytoplasm. Acts as an adapter that uses the DDX39B/UAP56-NFX1 pathway to ensure efficient mRNA export and delivering to the nuclear pore. Associates with spliced and unspliced mRNAs simultaneously with ALYREF/THOC4. This Mus musculus (Mouse) protein is UAP56-interacting factor (Fyttd1).